The chain runs to 97 residues: MQLSTALLFLLLTATSFTSQVLAHPGSIPTSCCFTMTSKKIPNTLLKSYKRITNNRCTLKAIVFKTKLGKEICADPKKKWVQDATKHLDQKLQTPKP.

An N-terminal signal peptide occupies residues 1 to 23; it reads MQLSTALLFLLLTATSFTSQVLA. Cystine bridges form between C32–C57 and C33–C73. O-linked (GalNAc...) threonine glycosylation occurs at T94.

Belongs to the intercrine beta (chemokine CC) family.

Its subcellular location is the secreted. In response to the presence of allergens, this protein directly promotes the accumulation of eosinophils (a prominent feature of allergic inflammatory reactions), but not lymphocytes, macrophages or neutrophils. Binds to CCR3. The chain is Eotaxin (Ccl11) from Rattus norvegicus (Rat).